A 31-amino-acid chain; its full sequence is Potassium channel toxin alpha-KTx 5.4 (31 aa).

3 disulfide bridges follow: C3–C21, C8–C26, and C12–C28. The interval 6–9 (RRCE) is [R/K]XCQ motif. The residue at position 31 (Y31) is a Tyrosine amide.

Belongs to the short scorpion toxin superfamily. Potassium channel inhibitor family. Alpha-KTx 05 subfamily. In terms of tissue distribution, expressed by the venom gland.

It localises to the secreted. Blocks small conductance calcium-activated potassium channels. Shows activity on KCa2.2/KCNN2 (IC(50)=0.0243 nM), KCa2.3/KCNN3 (IC(50)=1.7 nM), and KCa2.1/KCNN1 (IC(50)=42 nM). Induces cell death when tested on human T lymphoblastic leukemia Jurkat E6.1 and human breast cancer MDA-MB-231 cell lines which constituvely express KCa2.2/KCNN2, but not on human peripheral blood lymphocytes (which do not express KCa2.2/KCNN2). The polypeptide is Potassium channel toxin alpha-KTx 5.4 (Hottentotta tamulus (Eastern Indian scorpion)).